A 230-amino-acid chain; its full sequence is MLVTLTQSQARVIGVLLEKEVTTPEQYPLSLNSVTTACNQKSNREPVMELTELEVQNTLDELHAKNLIFEQSGSRATRYKHRFCNTEFSDLQLTPQQLAIICVMLLRGPQTPGELRTRAQRMAGFTHVDEVEKALNELMDVNGEQLVVRLEREPGKRESRYAQQFYKDTNEVISHEPAIASKSSQPNASNTTVATNDTAQEARICALEDTVTQLRCELEQLKQTLDELTR.

This sequence belongs to the UPF0502 family.

In Pseudoalteromonas atlantica (strain T6c / ATCC BAA-1087), this protein is UPF0502 protein Patl_1161.